The chain runs to 574 residues: Frizzled-7 (574 aa).

An N-terminal signal peptide occupies residues 1 to 32 (MRDPGAAAPLSSLGLCALVLALLGALSAGAGA). Residues 33–256 (QPYHGEKGIS…EEERRFARLW (224 aa)) are Extracellular-facing. The 120-residue stretch at 44–163 (PDHGFCQPIS…HGAGEICVGQ (120 aa)) folds into the FZ domain. 5 disulfides stabilise this stretch: Cys-49–Cys-110, Cys-57–Cys-103, Cys-94–Cys-131, Cys-120–Cys-160, and Cys-124–Cys-148. N-linked (GlcNAc...) asparagine glycosylation occurs at Asn-63. An N-linked (GlcNAc...) asparagine glycan is attached at Asn-164. A helical transmembrane segment spans residues 257-277 (VGVWSVLCCASTLFTVLTYLV). Residues 278 to 288 (DMRRFSYPERP) lie on the Cytoplasmic side of the membrane. A helical membrane pass occupies residues 289–309 (IIFLSGCYFMVAVAHVAGFLL). Over 310-336 (EDRAVCVERFSDDGYRTVAQGTKKEGC) the chain is Extracellular. The helical transmembrane segment at 337 to 357 (TILFMVLYFFGMASSIWWVIL) threads the bilayer. The Cytoplasmic portion of the chain corresponds to 358–379 (SLTWFLAAGMKWGHEAIEANSQ). Residues 380 to 400 (YFHLAAWAVPAVKTITILAMG) form a helical membrane-spanning segment. The Extracellular portion of the chain corresponds to 401 to 423 (QVDGDLLSGVCYVGLSSVDALRG). A helical transmembrane segment spans residues 424-444 (FVLAPLFVYLFIGTSFLLAGF). Over 445–470 (VSLFRIRTIMKHDGTKTEKLEKLMVR) the chain is Cytoplasmic. The helical transmembrane segment at 471–491 (IGVFSVLYTVPATIVLACYFY) threads the bilayer. The Extracellular portion of the chain corresponds to 492–528 (EQAFREHWERTWLLQTCKSYAVPCPPGHFPPMSPDFT). The helical transmembrane segment at 529–549 (VFMIKYLMTMIVGITTGFWIW) threads the bilayer. The Cytoplasmic portion of the chain corresponds to 550–574 (SGKTLQSWRRFYHRLSHSSKGETAV). The short motif at 552 to 557 (KTLQSW) is the Lys-Thr-X-X-X-Trp motif, mediates interaction with the PDZ domain of Dvl family members element. The PDZ-binding motif lies at 572-574 (TAV).

Belongs to the G-protein coupled receptor Fz/Smo family. In terms of assembly, interacts with MAGI3. Interacts with DVL1. Interacts with CCDC88C/DAPLE; the interaction displaces DVL1 from FZD7, leading to inhibition of canonical Wnt signaling and triggering of non-canonical Wnt responses. Interacts with MYOC. Binds to SDCBP; this interaction is increased by inositol trisphosphate (IP3). Interacts with glypican GPC3. As to quaternary structure, (Microbial infection) Interacts with C.difficile toxin TcdB; frizzled receptors constitute the major host receptors for TcdB in the colonic epithelium. Post-translationally, ubiquitinated by ZNRF3, leading to its degradation by the proteasome. High expression in adult skeletal muscle and fetal kidney, followed by fetal lung, adult heart, brain, and placenta. Specifically expressed in squamous cell esophageal carcinomas.

It localises to the cell membrane. The protein resides in the endosome membrane. Receptor for Wnt proteins. Most frizzled receptors are coupled to the beta-catenin canonical signaling pathway, which leads to the activation of disheveled proteins, inhibition of GSK-3 kinase, nuclear accumulation of beta-catenin and activation of Wnt target genes. A second signaling pathway involving PKC and calcium fluxes has been seen for some family members, but it is not yet clear if it represents a distinct pathway or if it can be integrated in the canonical pathway, as PKC seems to be required for Wnt-mediated inactivation of GSK-3 kinase. Both pathways seem to involve interactions with G-proteins. Activation by WNT8 induces expression of beta-catenin target genes. Following ligand activation, binds to CCDC88C/DAPLE which displaces DVL1 from FZD7 and leads to inhibition of canonical Wnt signaling, activation of G-proteins by CCDC88C and triggering of non-canonical Wnt responses. May be involved in transduction and intercellular transmission of polarity information during tissue morphogenesis and/or in differentiated tissues. Its function is as follows. (Microbial infection) Acts as a receptor for C.difficile toxin TcdB in the colonic epithelium. This Homo sapiens (Human) protein is Frizzled-7 (FZD7).